Reading from the N-terminus, the 973-residue chain is Sensor histidine kinase TmoS (973 aa).

In terms of domain architecture, PAS 1 spans 32-103 (REELARIIFD…NQKRLVEAAS (72 aa)). Residues 108 to 162 (VRCDIEILGKSGGREVIAVDFSLLPIRDEQENIVFLLAEGRNITDKKKAEAMLAL) form the PAC 1 domain. Positions 187–405 (KVSHELRTPL…LFQVKLPLNA (219 aa)) constitute a Histidine kinase 1 domain. The residue at position 190 (H190) is a Phosphohistidine; by autocatalysis. Positions 452–567 (RVLIVEDNPD…ELRARVSNLI (116 aa)) constitute a Response regulatory domain. Residue D500 is modified to 4-aspartylphosphate. The region spanning 611–681 (SEARWKAVYE…QRLARLLQSG (71 aa)) is the PAS 2 domain. The PAC 2 domain occupies 685 to 737 (YSVECSYLCKNGSTIWANASVSLMSPRVDEPQVILQIIDDITEKKQAQETLNQ). Positions 757–973 (YIAHEINQPL…ACFFVSIPVS (217 aa)) constitute a Histidine kinase 2 domain. At H760 the chain carries Phosphohistidine.

Post-translationally, autophosphorylated. Activation requires a sequential transfer of a phosphate group from a His in the primary transmitter domain, to an Asp in the receiver domain and to a His in the secondary transmitter domain.

The protein localises to the cytoplasm. It catalyses the reaction ATP + protein L-histidine = ADP + protein N-phospho-L-histidine.. Activity is regulated by agonists and antagonists. Binding of agonists such as toluene or benzene to TmoS stimulates autophosphorylation. Toluene causes the most pronounced increase, followed by benzene, chlorobenzene and ethylbenzene. Activity is inhibited by antagonists such as o-xylene, o-chlorotoluene and trimethylbenzene isomers, which bind to TmoS but do not stimulate autophosphorylation. Member of the two-component regulatory system TmoS/TmoT involved in the regulation of toluene degradation. Probably phosphorylates TmoT via a four-step phosphorelay in response to toluene. Can also be induced by benzene and ethylbenzene. The polypeptide is Sensor histidine kinase TmoS (tmoS) (Ectopseudomonas mendocina (Pseudomonas mendocina)).